The chain runs to 541 residues: Cytosolic phospholipase A2 gamma (541 aa).

Residues 1–541 (MGSSEVSIIP…KDSARSCCLA (541 aa)) enclose the PLA2c domain. Residue S82 is the Nucleophile of the active site. The segment at 260 to 292 (LTLKGLWRRAVANAKSIGHLIFARLLRLQESSQ) is required for lipid droplet localization. S337 bears the Phosphoserine mark. Residue D385 is the Proton acceptor of the active site. C538 carries the post-translational modification Cysteine methyl ester. Residue C538 is the site of S-farnesyl cysteine attachment. The propeptide at 539–541 (CLA) is removed in mature form.

In terms of assembly, (Microbial infection) Interacts with HCV non-structural protein 4B/NS4B; this interaction likely initiates the recruitment of replication complexes to lipid droplets. In terms of tissue distribution, highly expressed in heart and skeletal muscle.

The protein localises to the cell membrane. Its subcellular location is the endoplasmic reticulum membrane. The protein resides in the mitochondrion membrane. It localises to the lipid droplet. It catalyses the reaction a 1,2-diacyl-sn-glycero-3-phosphocholine + H2O = a 1-acyl-sn-glycero-3-phosphocholine + a fatty acid + H(+). The catalysed reaction is a 1-O-alkyl-2-acyl-sn-glycero-3-phosphocholine + H2O = a 1-O-alkyl-sn-glycero-3-phosphocholine + a fatty acid + H(+). It carries out the reaction 1,2-dihexadecanoyl-sn-glycero-3-phosphocholine + H2O = 1-hexadecanoyl-sn-glycero-3-phosphocholine + hexadecanoate + H(+). The enzyme catalyses 1-hexadecanoyl-2-(9Z-octadecenoyl)-sn-glycero-3-phosphocholine + H2O = 1-hexadecanoyl-sn-glycero-3-phosphocholine + (9Z)-octadecenoate + H(+). It catalyses the reaction 1-hexadecanoyl-2-(9Z,12Z-octadecadienoyl)-sn-glycero-3-phosphocholine + H2O = (9Z,12Z)-octadecadienoate + 1-hexadecanoyl-sn-glycero-3-phosphocholine + H(+). The catalysed reaction is 1-hexadecanoyl-2-(5Z,8Z,11Z,14Z-eicosatetraenoyl)-sn-glycero-3-phosphocholine + H2O = 1-hexadecanoyl-sn-glycero-3-phosphocholine + (5Z,8Z,11Z,14Z)-eicosatetraenoate + H(+). It carries out the reaction 1-O-hexadecyl-2-(5Z,8Z,11Z,14Z)-eicosatetraenoyl-sn-glycero-3-phosphocholine + H2O = 1-O-hexadecyl-sn-glycero-3-phosphocholine + (5Z,8Z,11Z,14Z)-eicosatetraenoate + H(+). The enzyme catalyses 1-hexadecanoyl-2-(5Z,8Z,11Z,14Z-eicosatetraenoyl)-sn-glycero-3-phosphocholine + H2O = 2-(5Z,8Z,11Z,14Z)-eicosatetraenoyl-sn-glycero-3-phosphocholine + hexadecanoate + H(+). It catalyses the reaction a 1-acyl-sn-glycero-3-phosphocholine + H2O = sn-glycerol 3-phosphocholine + a fatty acid + H(+). The catalysed reaction is 1-hexadecanoyl-sn-glycero-3-phosphocholine + H2O = sn-glycerol 3-phosphocholine + hexadecanoate + H(+). It carries out the reaction 2 1-hexadecanoyl-sn-glycero-3-phosphocholine = 1,2-dihexadecanoyl-sn-glycero-3-phosphocholine + sn-glycerol 3-phosphocholine. The enzyme catalyses 1-hexadecanoyl-sn-glycero-3-phosphoethanolamine + 1-hexadecanoyl-sn-glycero-3-phosphocholine = 1,2-dihexadecanoyl-sn-glycero-3-phosphoethanolamine + sn-glycerol 3-phosphocholine. It catalyses the reaction 1-hexadecanoyl-sn-glycero-3-phosphoethanolamine + 1-hexadecanoyl-sn-glycero-3-phosphocholine = sn-glycero-3-phosphoethanolamine + 1,2-dihexadecanoyl-sn-glycero-3-phosphocholine. The catalysed reaction is 2 1-hexadecanoyl-sn-glycero-3-phosphoethanolamine = 1,2-dihexadecanoyl-sn-glycero-3-phosphoethanolamine + sn-glycero-3-phosphoethanolamine. It carries out the reaction 1-O-hexadecyl-sn-glycero-3-phosphocholine + 1-hexadecanoyl-sn-glycero-3-phosphocholine = 1-O-hexadecyl-2-hexadecanoyl-sn-glycero-3-phosphocholine + sn-glycerol 3-phosphocholine. The enzyme catalyses a 1-O-(1Z-alkenyl)-sn-glycero-3-phosphoethanolamine + 1-hexadecanoyl-sn-glycero-3-phosphocholine = 1-O-(1Z)-alkenyl-2-hexadecanoyl-sn-glycero-3-phosphoethanolamine + sn-glycerol 3-phosphocholine. It catalyses the reaction 1-O-hexadecyl-sn-glycero-3-phosphocholine + 1-hexadecanoyl-sn-glycero-3-phosphoethanolamine = 1-O-hexadecyl-2-hexadecanoyl-sn-glycero-3-phosphocholine + sn-glycero-3-phosphoethanolamine. The catalysed reaction is 1-octadecanoyl-2-(5Z,8Z,11Z,14Z)-eicosatetraenoyl-sn-glycero-3-phosphoethanolamine + 1-hexadecanoyl-sn-glycero-3-phosphocholine = 1-octadecanoyl-sn-glycero-3-phosphoethanolamine + 1-hexadecanoyl-2-(5Z,8Z,11Z,14Z-eicosatetraenoyl)-sn-glycero-3-phosphocholine. It carries out the reaction 1-octadecanoyl-2-(5Z,8Z,11Z,14Z)-eicosatetraenoyl-sn-glycero-3-phosphoethanolamine + 1-O-hexadecyl-sn-glycero-3-phosphocholine = 1-octadecanoyl-sn-glycero-3-phosphoethanolamine + 1-O-hexadecyl-2-(5Z,8Z,11Z,14Z)-eicosatetraenoyl-sn-glycero-3-phosphocholine. The enzyme catalyses 1-hexadecanoyl-2-(9Z,12Z-octadecadienoyl)-sn-glycero-3-phosphocholine + a 1-O-(1Z-alkenyl)-sn-glycero-3-phosphoethanolamine = 1-O-(1Z-alkenyl)-2-(9Z,12Z-octadecadienoyl)-sn-glycero-3-phosphoethanolamine + 1-hexadecanoyl-sn-glycero-3-phosphocholine. It catalyses the reaction 1-hexadecanoyl-2-(5Z,8Z,11Z,14Z-eicosatetraenoyl)-sn-glycero-3-phosphocholine + a 1-O-(1Z-alkenyl)-sn-glycero-3-phosphoethanolamine = 1-O-(1Z)-alkenyl-2-(5Z,8Z,11Z,14Z)-eicosatetraenoyl-sn-glycero-3-phosphoethanolamine + 1-hexadecanoyl-sn-glycero-3-phosphocholine. Its activity is regulated as follows. Not regulated by calcium, coenzyme A or ATP. Lysophospholipase activity is inhibited by palmitoyl-CoA. Lysophospholipase and O-acyltransferase activities are inhibited by methylarachidonoylfluorophosphonate. Lysophospholipase activity is inhibited by phosphatidate or lysophosphatidate. O-acyltransferase activity is up-regulated at low concentration (10-20 uM) of phosphatidate or lysophosphatidate, but inhibited at higher concentrations. In terms of biological role, calcium-independent phospholipase, lysophospholipase and O-acyltransferase involved in phospholipid remodeling with implications in endoplasmic reticulum membrane homeostasis and lipid droplet biogenesis. Preferentially hydrolyzes the ester bond of the fatty acyl group attached at the sn-2 position of phospholipids with choline and ethanolamine head groups, producing lysophospholipids that are used in deacylation-reacylation cycles. Transfers the sn-1 fatty acyl from one lysophospholipid molecule to the sn-2 position of another lysophospholipid to form diacyl, alkylacyl and alkenylacyl glycerophospholipids. Cleaves ester bonds but not alkyl or alkenyl ether bonds at sn-1 position of lysophospholipids. Catalyzes sn-2 fatty acyl transfer from phospholipids to the sn-2 position of 1-O-alkyl or 1-O-alkenyl lysophospholipids with lower efficiency. In response to dietary fatty acids, may play a role in the formation of nascent lipid droplets from the endoplasmic reticulum likely by regulating the phospholipid composition of these organelles. Functionally, (Microbial infection) May play a role in replication and assembly of human hepatitis C virus (HCV). In response to HCV infection, promotes remodeling of host endoplasmic reticulum membranes to form organelle-like structures called membranous web, where HCV replication occur. Can further mediate translocation of replication complexes to lipid droplets to enable virion assembly. (Microbial infection) May facilitate human T-lymphotropic virus type 1 (HTLV-1) infection by promoting leukotriene B4 (LTB4) biosynthesis. LTB4 acts as a chemoattractant for HTLV-1-infected CD4-positive T cells and favors cell to cell viral transmission. In Homo sapiens (Human), this protein is Cytosolic phospholipase A2 gamma (PLA2G4C).